The following is a 342-amino-acid chain: MANITAKQVKELRETTGAGVMDAKKALVEAEGDMQRAIEIIHEKGEAKAAKKANRIAAEGLTGVYVDGNVAAIVEVNAETDFVAQNEQFKTLVNETAETIAKGKPANNEEALALTMPSGESLEEAYVNATATIGEKISFRRFAVLEKTDDQHFGAYQHNGGHIGVLTVVEGGDEALAKHIAMHIAAMSPKVLSYKELDPAFVREELAQLNHKIDQDNESRAMVNKPALPHLKYGSKAQLTDEVIAQAEEDIKAELKAEGKPEKIWDKIIPGKMARFMLDNTKVDQENTLLAQLYVMDDSKTVEQYLESVNASVVSFVRFEVGEGIEKKQEDFAAEVAAQMKN.

The tract at residues 80–83 is involved in Mg(2+) ion dislocation from EF-Tu; it reads TDFV.

It belongs to the EF-Ts family.

The protein localises to the cytoplasm. Associates with the EF-Tu.GDP complex and induces the exchange of GDP to GTP. It remains bound to the aminoacyl-tRNA.EF-Tu.GTP complex up to the GTP hydrolysis stage on the ribosome. The protein is Elongation factor Ts of Lactobacillus delbrueckii subsp. bulgaricus (strain ATCC 11842 / DSM 20081 / BCRC 10696 / JCM 1002 / NBRC 13953 / NCIMB 11778 / NCTC 12712 / WDCM 00102 / Lb 14).